The primary structure comprises 62 residues: Large ribosomal subunit protein eL24 (62 aa).

Residues Cys6, Cys9, Cys32, and Cys36 each contribute to the Zn(2+) site. A C4-type zinc finger spans residues 6 to 36 (CSFCGELLEPGTGLLFAKRDGSTYYFCSSKC).

It belongs to the eukaryotic ribosomal protein eL24 family. In terms of assembly, part of the 50S ribosomal subunit. Forms a cluster with proteins L3 and L14. Requires Zn(2+) as cofactor.

Functionally, binds to the 23S rRNA. In Methanococcoides burtonii (strain DSM 6242 / NBRC 107633 / OCM 468 / ACE-M), this protein is Large ribosomal subunit protein eL24.